A 94-amino-acid polypeptide reads, in one-letter code: Small ribosomal subunit protein uS19 (94 aa).

This sequence belongs to the universal ribosomal protein uS19 family.

Functionally, protein S19 forms a complex with S13 that binds strongly to the 16S ribosomal RNA. The sequence is that of Small ribosomal subunit protein uS19 from Clostridium novyi (strain NT).